A 115-amino-acid chain; its full sequence is DNA-directed RNA polymerase II subunit RPB11-b2 (115 aa).

This sequence belongs to the archaeal Rpo11/eukaryotic RPB11/RPC19 RNA polymerase subunit family. Component of the RNA polymerase II (Pol II) complex consisting of 12 subunits.

It is found in the nucleus. DNA-dependent RNA polymerase catalyzes the transcription of DNA into RNA using the four ribonucleoside triphosphates as substrates. Component of RNA polymerase II which synthesizes mRNA precursors and many functional non-coding RNAs. Pol II is the central component of the basal RNA polymerase II transcription machinery. It is composed of mobile elements that move relative to each other. RPB11 is part of the core element with the central large cleft. The polypeptide is DNA-directed RNA polymerase II subunit RPB11-b2 (POLR2J3) (Homo sapiens (Human)).